Consider the following 211-residue polypeptide: Small ribosomal subunit protein uS5 (211 aa).

In terms of domain architecture, S5 DRBM spans 51 to 114; sequence LKHEVLDVSL…ANAKLNITPV (64 aa).

Belongs to the universal ribosomal protein uS5 family. In terms of assembly, part of the 30S ribosomal subunit. Contacts protein S4.

In terms of biological role, with S4 and S12 plays an important role in translational accuracy. The polypeptide is Small ribosomal subunit protein uS5 (Ignicoccus hospitalis (strain KIN4/I / DSM 18386 / JCM 14125)).